We begin with the raw amino-acid sequence, 347 residues long: GDT1-like protein 2, chloroplastic (347 aa).

A chloroplast-targeting transit peptide spans 1 to 12 (MATAISVGVAVP). The tract at residues 70 to 97 (EAGSHGEHLDSSATRDSNKPTKPPSGSR) is disordered. Transmembrane regions (helical) follow at residues 99–119 (PQSI…IVFF), 124–144 (SAVV…LIFV), 165–185 (ALVL…SVII), 196–216 (FQTT…FFGF), 257–277 (LTSP…AEWG), 299–319 (GAIA…AFLA), and 327–347 (VGLI…FGVF).

Belongs to the GDT1 family.

Its subcellular location is the plastid. The protein localises to the chloroplast membrane. This is GDT1-like protein 2, chloroplastic from Oryza sativa subsp. japonica (Rice).